The chain runs to 106 residues: Iron-sulfur cluster assembly protein CyaY (106 aa).

Belongs to the frataxin family. As to quaternary structure, interacts with IscS. Certain pairs of proteins can bind simultaneously to IscS; IscS-IscU-CyaY complexes can be isolated in vitro, but (IscS-TusA-CyaY) complexes cannot.

Functionally, involved in iron-sulfur (Fe-S) cluster assembly. May act as a regulator of Fe-S biogenesis. The sequence is that of Iron-sulfur cluster assembly protein CyaY from Escherichia coli O157:H7.